Here is a 144-residue protein sequence, read N- to C-terminus: Putative sugar phosphate isomerase RBE_0278 (144 aa).

H12 contacts substrate. H101 serves as the catalytic Proton donor. A substrate-binding site is contributed by R135.

The protein belongs to the LacAB/RpiB family.

The sequence is that of Putative sugar phosphate isomerase RBE_0278 from Rickettsia bellii (strain RML369-C).